The sequence spans 475 residues: Ribulose bisphosphate carboxylase large chain (475 aa).

Residues 1 to 2 (MS) constitute a propeptide that is removed on maturation. N-acetylproline is present on proline 3. Lysine 14 is modified (N6,N6,N6-trimethyllysine). Positions 123 and 173 each coordinate substrate. Catalysis depends on lysine 175, which acts as the Proton acceptor. Lysine 177 serves as a coordination point for substrate. Mg(2+) is bound by residues lysine 201, aspartate 203, and glutamate 204. Lysine 201 is subject to N6-carboxylysine. The Proton acceptor role is filled by histidine 294. Arginine 295, histidine 327, and serine 379 together coordinate substrate.

Belongs to the RuBisCO large chain family. Type I subfamily. Heterohexadecamer of 8 large chains and 8 small chains; disulfide-linked. The disulfide link is formed within the large subunit homodimers. Requires Mg(2+) as cofactor. The disulfide bond which can form in the large chain dimeric partners within the hexadecamer appears to be associated with oxidative stress and protein turnover.

Its subcellular location is the plastid. It is found in the chloroplast. The enzyme catalyses 2 (2R)-3-phosphoglycerate + 2 H(+) = D-ribulose 1,5-bisphosphate + CO2 + H2O. It catalyses the reaction D-ribulose 1,5-bisphosphate + O2 = 2-phosphoglycolate + (2R)-3-phosphoglycerate + 2 H(+). In terms of biological role, ruBisCO catalyzes two reactions: the carboxylation of D-ribulose 1,5-bisphosphate, the primary event in carbon dioxide fixation, as well as the oxidative fragmentation of the pentose substrate in the photorespiration process. Both reactions occur simultaneously and in competition at the same active site. This is Ribulose bisphosphate carboxylase large chain from Stellaria media (Common chickweed).